We begin with the raw amino-acid sequence, 236 residues long: 5'-methylthioadenosine/S-adenosylhomocysteine nucleosidase (236 aa).

Residue E12 is the Proton acceptor of the active site. Residues G78, I153, and 174-175 (ME) each bind substrate. Residue D198 is the Proton donor of the active site.

This sequence belongs to the PNP/UDP phosphorylase family. MtnN subfamily.

The enzyme catalyses S-adenosyl-L-homocysteine + H2O = S-(5-deoxy-D-ribos-5-yl)-L-homocysteine + adenine. It catalyses the reaction S-methyl-5'-thioadenosine + H2O = 5-(methylsulfanyl)-D-ribose + adenine. The catalysed reaction is 5'-deoxyadenosine + H2O = 5-deoxy-D-ribose + adenine. The protein operates within amino-acid biosynthesis; L-methionine biosynthesis via salvage pathway; S-methyl-5-thio-alpha-D-ribose 1-phosphate from S-methyl-5'-thioadenosine (hydrolase route): step 1/2. Its function is as follows. Catalyzes the irreversible cleavage of the glycosidic bond in both 5'-methylthioadenosine (MTA) and S-adenosylhomocysteine (SAH/AdoHcy) to adenine and the corresponding thioribose, 5'-methylthioribose and S-ribosylhomocysteine, respectively. Also cleaves 5'-deoxyadenosine, a toxic by-product of radical S-adenosylmethionine (SAM) enzymes, into 5-deoxyribose and adenine. This is 5'-methylthioadenosine/S-adenosylhomocysteine nucleosidase from Shewanella baltica (strain OS185).